Reading from the N-terminus, the 37-residue chain is Large ribosomal subunit protein bL36 (37 aa).

This sequence belongs to the bacterial ribosomal protein bL36 family.

The chain is Large ribosomal subunit protein bL36 from Leptospira interrogans serogroup Icterohaemorrhagiae serovar copenhageni (strain Fiocruz L1-130).